A 200-amino-acid polypeptide reads, in one-letter code: Shikimate kinase (200 aa).

33–38 (GAGKST) contacts ATP. Residue S37 coordinates Mg(2+). D55, R79, and G101 together coordinate substrate. R139 is a binding site for ATP. R158 provides a ligand contact to substrate.

The protein belongs to the shikimate kinase family. In terms of assembly, monomer. It depends on Mg(2+) as a cofactor.

It is found in the cytoplasm. The enzyme catalyses shikimate + ATP = 3-phosphoshikimate + ADP + H(+). It participates in metabolic intermediate biosynthesis; chorismate biosynthesis; chorismate from D-erythrose 4-phosphate and phosphoenolpyruvate: step 5/7. Its function is as follows. Catalyzes the specific phosphorylation of the 3-hydroxyl group of shikimic acid using ATP as a cosubstrate. The protein is Shikimate kinase of Brucella abortus (strain S19).